A 433-amino-acid polypeptide reads, in one-letter code: Aspartate--tRNA(Asp/Asn) ligase (433 aa).

Glu167 lines the L-aspartate pocket. The tract at residues 189–192 (QLFK) is aspartate. Arg211 serves as a coordination point for L-aspartate. Residues 211–213 (RAE), 219–221 (RHL), and Glu356 each bind ATP. Mg(2+) is bound by residues Glu356 and Ser359. L-aspartate is bound by residues Ser359 and Arg363. Residue 404 to 407 (GGER) participates in ATP binding.

Belongs to the class-II aminoacyl-tRNA synthetase family. Type 2 subfamily. In terms of assembly, homodimer. The cofactor is Mg(2+).

It is found in the cytoplasm. The enzyme catalyses tRNA(Asx) + L-aspartate + ATP = L-aspartyl-tRNA(Asx) + AMP + diphosphate. Aspartyl-tRNA synthetase with relaxed tRNA specificity since it is able to aspartylate not only its cognate tRNA(Asp) but also tRNA(Asn). Reaction proceeds in two steps: L-aspartate is first activated by ATP to form Asp-AMP and then transferred to the acceptor end of tRNA(Asp/Asn). The sequence is that of Aspartate--tRNA(Asp/Asn) ligase from Haloferax volcanii (Halobacterium volcanii).